Here is an 864-residue protein sequence, read N- to C-terminus: Leucine--tRNA ligase (864 aa).

Residues 50–60 (PYPSGKIHMGH) carry the 'HIGH' region motif. The 'KMSKS' region motif lies at 622-626 (KMSKS). Lysine 625 provides a ligand contact to ATP.

Belongs to the class-I aminoacyl-tRNA synthetase family.

It localises to the cytoplasm. It carries out the reaction tRNA(Leu) + L-leucine + ATP = L-leucyl-tRNA(Leu) + AMP + diphosphate. In Acidiphilium cryptum (strain JF-5), this protein is Leucine--tRNA ligase.